A 326-amino-acid polypeptide reads, in one-letter code: Undecaprenyl-phosphate 4-deoxy-4-formamido-L-arabinose transferase (326 aa).

The next 2 helical transmembrane spans lie at 235–255 (LLSV…VLLI) and 270–290 (VFTL…GMGL).

This sequence belongs to the glycosyltransferase 2 family.

It is found in the cell inner membrane. It catalyses the reaction UDP-4-deoxy-4-formamido-beta-L-arabinose + di-trans,octa-cis-undecaprenyl phosphate = 4-deoxy-4-formamido-alpha-L-arabinopyranosyl di-trans,octa-cis-undecaprenyl phosphate + UDP. Its pathway is glycolipid biosynthesis; 4-amino-4-deoxy-alpha-L-arabinose undecaprenyl phosphate biosynthesis; 4-amino-4-deoxy-alpha-L-arabinose undecaprenyl phosphate from UDP-4-deoxy-4-formamido-beta-L-arabinose and undecaprenyl phosphate: step 1/2. The protein operates within bacterial outer membrane biogenesis; lipopolysaccharide biosynthesis. Functionally, catalyzes the transfer of 4-deoxy-4-formamido-L-arabinose from UDP to undecaprenyl phosphate. The modified arabinose is attached to lipid A and is required for resistance to polymyxin and cationic antimicrobial peptides. The chain is Undecaprenyl-phosphate 4-deoxy-4-formamido-L-arabinose transferase from Serratia proteamaculans (strain 568).